The primary structure comprises 378 residues: Probable 3-hydroxyisobutyryl-CoA hydrolase 2 (378 aa).

Substrate contacts are provided by glycine 115, glutamate 138, and aspartate 146. The Microbody targeting signal motif lies at 376-378 (AKL).

This sequence belongs to the enoyl-CoA hydratase/isomerase family.

It is found in the peroxisome. It catalyses the reaction 3-hydroxy-2-methylpropanoyl-CoA + H2O = 3-hydroxy-2-methylpropanoate + CoA + H(+). It functions in the pathway amino-acid degradation; L-valine degradation. In terms of biological role, involved in valine catabolism. The sequence is that of Probable 3-hydroxyisobutyryl-CoA hydrolase 2 from Arabidopsis thaliana (Mouse-ear cress).